The chain runs to 126 residues: Protein mmf2, mitochondrial (126 aa).

The protein belongs to the RutC family.

It localises to the mitochondrion. It is found in the cytoplasm. In terms of biological role, plays a role in the maintenance of mitochondrial DNA. The sequence is that of Protein mmf2, mitochondrial (mmf2) from Schizosaccharomyces pombe (strain 972 / ATCC 24843) (Fission yeast).